The chain runs to 251 residues: CDP-diacylglycerol pyrophosphatase (251 aa).

The helical transmembrane segment at alanine 4–tryptophan 24 threads the bilayer.

It belongs to the Cdh family.

It is found in the cell inner membrane. It carries out the reaction a CDP-1,2-diacyl-sn-glycerol + H2O = a 1,2-diacyl-sn-glycero-3-phosphate + CMP + 2 H(+). It participates in phospholipid metabolism; CDP-diacylglycerol degradation; phosphatidate from CDP-diacylglycerol: step 1/1. This is CDP-diacylglycerol pyrophosphatase from Escherichia coli (strain SE11).